We begin with the raw amino-acid sequence, 141 residues long: Endoribonuclease YbeY (141 aa).

The Zn(2+) site is built by His105, His109, and Asp115.

It belongs to the endoribonuclease YbeY family. Zn(2+) is required as a cofactor.

It is found in the cytoplasm. In terms of biological role, single strand-specific metallo-endoribonuclease involved in late-stage 70S ribosome quality control and in maturation of the 3' terminus of the 16S rRNA. The polypeptide is Endoribonuclease YbeY (Chloroherpeton thalassium (strain ATCC 35110 / GB-78)).